Consider the following 510-residue polypeptide: UDP-galactopyranose mutase (510 aa).

The FAD site is built by threonine 18, aspartate 38, leucine 46, and glycine 61. UDP-alpha-D-galactose-binding residues include glycine 61 and glycine 62. Histidine 63 serves as a coordination point for FAD. NADH-binding residues include histidine 68, arginine 91, and serine 93. NADPH is bound by residues histidine 68, arginine 91, serine 93, and tyrosine 104. UDP-alpha-D-galactose is bound by residues tyrosine 104, glutamine 107, methionine 159, tyrosine 162, asparagine 163, tryptophan 167, and arginine 182. Asparagine 203 contributes to the NADPH binding site. Asparagine 207 is a binding site for UDP-alpha-D-galactose. Valine 242 provides a ligand contact to FAD. 2 residues coordinate NADPH: tryptophan 315 and tyrosine 317. Positions 317, 327, and 419 each coordinate UDP-alpha-D-galactose. Residue arginine 327 participates in FAD binding. NADH is bound by residues tyrosine 419 and arginine 447. Residues tyrosine 419 and arginine 447 each contribute to the NADPH site. Arginine 447 provides a ligand contact to FAD. Residue tyrosine 453 participates in UDP-alpha-D-galactose binding. Positions 456, 457, and 458 each coordinate FAD. UDP-alpha-D-galactose is bound at residue asparagine 457. Asparagine 457 lines the NADH pocket. Asparagine 457 lines the NADPH pocket. Histidine 460 contacts NADPH. Serine 461 serves as a coordination point for FAD.

Belongs to the UDP-galactopyranose/dTDP-fucopyranose mutase family. Homotetramer. Requires FAD as cofactor.

It carries out the reaction UDP-alpha-D-galactose = UDP-alpha-D-galactofuranose. UDP-galactopyranose mutase, key flavoenzyme of galactofuranose metabolism that catalyzes the 6-to-5 ring contraction of UDP-galactopyranose to UDP-galactofuranose, the donor used by various galacto-furanosyltransferases. Controls the biosynthesis of galactomannan and galactofuranose containing glycoconjugates. The flavin functions as nucleophile, forming a flavin-sugar adduct that facilitates galactose-ring opening and contraction. The binding of UDP-galactopyranose induces profound conformational changes in the enzyme and two loops on opposite sides of the active site move toward each other by over 10 Angstroms to cover the substrate and create a closed active site. In Aspergillus fumigatus (Neosartorya fumigata), this protein is UDP-galactopyranose mutase.